The sequence spans 232 residues: Uracil phosphoribosyltransferase (232 aa).

38–42 serves as a coordination point for GTP; that stretch reads KGLVR. 5-phospho-alpha-D-ribose 1-diphosphate-binding positions include Arg87, Arg112, and 140-148; that span reads DPMIATGST. Uracil is bound by residues Ile204 and 209 to 211; that span reads GDA. Asp210 is a 5-phospho-alpha-D-ribose 1-diphosphate binding site.

This sequence belongs to the UPRTase family. Requires Mg(2+) as cofactor.

The catalysed reaction is UMP + diphosphate = 5-phospho-alpha-D-ribose 1-diphosphate + uracil. Its pathway is pyrimidine metabolism; UMP biosynthesis via salvage pathway; UMP from uracil: step 1/1. With respect to regulation, allosterically activated by GTP. Its function is as follows. Catalyzes the conversion of uracil and 5-phospho-alpha-D-ribose 1-diphosphate (PRPP) to UMP and diphosphate. The chain is Uracil phosphoribosyltransferase from Methanococcus vannielii (strain ATCC 35089 / DSM 1224 / JCM 13029 / OCM 148 / SB).